We begin with the raw amino-acid sequence, 196 residues long: MTPTLISAFLTYTLITALTPGPNNILALSSVTSHGLRRSLRVLAGMSVGFIITMLICAALTFSLVELDSRFTLVLGWIGAAYILWLAWQIAKSKPATGTPSVEPVGFWASLGLQFVNVKIILYGITALSTFVLPVTREPVWLISVSLLLAAIGALGNLCWALAGHLFQRLFLLYGRQLNWMLAALLVYCAVRIVVE.

A helical membrane pass occupies residues 1-21 (MTPTLISAFLTYTLITALTPG). Residues 22-41 (PNNILALSSVTSHGLRRSLR) are Cytoplasmic-facing. A helical transmembrane segment spans residues 42-62 (VLAGMSVGFIITMLICAALTF). Over 63–70 (SLVELDSR) the chain is Periplasmic. Residues 71 to 91 (FTLVLGWIGAAYILWLAWQIA) form a helical membrane-spanning segment. The Cytoplasmic portion of the chain corresponds to 92 to 114 (KSKPATGTPSVEPVGFWASLGLQ). The helical transmembrane segment at 115–135 (FVNVKIILYGITALSTFVLPV) threads the bilayer. The Periplasmic segment spans residues 136–139 (TREP). The helical transmembrane segment at 140 to 160 (VWLISVSLLLAAIGALGNLCW) threads the bilayer. At 161-170 (ALAGHLFQRL) the chain is on the cytoplasmic side. The helical transmembrane segment at 171–191 (FLLYGRQLNWMLAALLVYCAV) threads the bilayer. Topologically, residues 192 to 196 (RIVVE) are periplasmic.

Belongs to the Rht family.

Its subcellular location is the cell inner membrane. It carries out the reaction O-acetyl-L-serine(in) = O-acetyl-L-serine(out). The enzyme catalyses L-cysteine(in) = L-cysteine(out). Functionally, exporter of O-acetylserine (OAS) and cysteine. In Klebsiella pneumoniae subsp. pneumoniae (strain ATCC 700721 / MGH 78578), this protein is Cysteine/O-acetylserine efflux protein (eamB).